A 245-amino-acid chain; its full sequence is MNRWVEKWLRVYLKCYINLILFYRNVYPPQSFDYTTYQSFNLPQFVPINRHPALIDYIEELILDVLSKLTHVYRFSICIINKKNDLCIEKYVLDFSELQHVDKDDQIITETEVFDEFRSSLNSLIMHLEKLPKVNDDTITFEAVINAIELELGHKLDRNRRVDSLEEKAEIERDSNWVKCQEDENLPDNNGFQPPKIKLTSLVGSDVGPLIIHQFSEKLISGDDKILNGVYSQYEEGESIFGSLF.

Positions 3–203 constitute an HORMA domain; sequence RWVEKWLRVY…PPKIKLTSLV (201 aa).

Belongs to the MAD2 family. In terms of assembly, forms DNA polymerase zeta with REV3. Interacts with REV1.

The protein localises to the mitochondrion. In terms of biological role, required for DNA damage induced mutagenesis. Involved in DNA repair, mitochondrial DNA repair and translesion synthesis. Has a role in the bypass of abasic (AP) sites. This Saccharomyces cerevisiae (strain ATCC 204508 / S288c) (Baker's yeast) protein is DNA polymerase zeta processivity subunit (REV7).